Reading from the N-terminus, the 254-residue chain is Imidazole glycerol phosphate synthase subunit HisF (254 aa).

Residues Asp12 and Asp131 contribute to the active site.

This sequence belongs to the HisA/HisF family. In terms of assembly, heterodimer of HisH and HisF.

Its subcellular location is the cytoplasm. It carries out the reaction 5-[(5-phospho-1-deoxy-D-ribulos-1-ylimino)methylamino]-1-(5-phospho-beta-D-ribosyl)imidazole-4-carboxamide + L-glutamine = D-erythro-1-(imidazol-4-yl)glycerol 3-phosphate + 5-amino-1-(5-phospho-beta-D-ribosyl)imidazole-4-carboxamide + L-glutamate + H(+). It functions in the pathway amino-acid biosynthesis; L-histidine biosynthesis; L-histidine from 5-phospho-alpha-D-ribose 1-diphosphate: step 5/9. IGPS catalyzes the conversion of PRFAR and glutamine to IGP, AICAR and glutamate. The HisF subunit catalyzes the cyclization activity that produces IGP and AICAR from PRFAR using the ammonia provided by the HisH subunit. The sequence is that of Imidazole glycerol phosphate synthase subunit HisF from Frankia casuarinae (strain DSM 45818 / CECT 9043 / HFP020203 / CcI3).